Reading from the N-terminus, the 95-residue chain is Small ribosomal subunit protein bS18 (95 aa).

This sequence belongs to the bacterial ribosomal protein bS18 family. As to quaternary structure, part of the 30S ribosomal subunit. Forms a tight heterodimer with protein bS6.

Its function is as follows. Binds as a heterodimer with protein bS6 to the central domain of the 16S rRNA, where it helps stabilize the platform of the 30S subunit. In Rickettsia prowazekii (strain Madrid E), this protein is Small ribosomal subunit protein bS18.